The sequence spans 274 residues: MSDFVNDGHTTPEAFVQHIKSLGRYDFPEPAIVDPEGMGIVAIGGDLAPETLISAYAQGLFPWFNDDEPIAWWCPEPRCVMQPTDYQPSKSLRKLANRSRWQLTLNQAFDEVIHACSLPRSNGVNNDLNESQPVGEHTWIHDEMIEAYTELHAQGFAHSIEVWDDKGALVGGLYGLKIGGIYFGESMFHIASNASKLAFWGLMRLCEHSNVNLVDCQLPNDHLMSLGAITLSRTEFLTQLDILISNSSDNWHKNSHKPLAVPLLGSLQPWQLNL.

This sequence belongs to the L/F-transferase family.

It localises to the cytoplasm. The catalysed reaction is N-terminal L-lysyl-[protein] + L-leucyl-tRNA(Leu) = N-terminal L-leucyl-L-lysyl-[protein] + tRNA(Leu) + H(+). It catalyses the reaction N-terminal L-arginyl-[protein] + L-leucyl-tRNA(Leu) = N-terminal L-leucyl-L-arginyl-[protein] + tRNA(Leu) + H(+). The enzyme catalyses L-phenylalanyl-tRNA(Phe) + an N-terminal L-alpha-aminoacyl-[protein] = an N-terminal L-phenylalanyl-L-alpha-aminoacyl-[protein] + tRNA(Phe). Functions in the N-end rule pathway of protein degradation where it conjugates Leu, Phe and, less efficiently, Met from aminoacyl-tRNAs to the N-termini of proteins containing an N-terminal arginine or lysine. The chain is Leucyl/phenylalanyl-tRNA--protein transferase from Psychrobacter cryohalolentis (strain ATCC BAA-1226 / DSM 17306 / VKM B-2378 / K5).